Here is a 51-residue protein sequence, read N- to C-terminus: MSSHKTFRIKRFLAKKQKQNRPIPQWIRMKTGNKIRYNSKRRHWRRTKLGL.

This sequence belongs to the eukaryotic ribosomal protein eL39 family. In terms of assembly, component of the large ribosomal subunit. Interacts with IMPACT.

Its subcellular location is the cytoplasm. Its function is as follows. RNA-binding component of the large ribosomal subunit. The ribosome is a large ribonucleoprotein complex responsible for the synthesis of proteins in the cell. This is Large ribosomal subunit protein eL39 (Rpl39) from Mus musculus (Mouse).